The chain runs to 131 residues: ATP synthase epsilon chain, chloroplastic (131 aa).

The protein belongs to the ATPase epsilon chain family. F-type ATPases have 2 components, CF(1) - the catalytic core - and CF(0) - the membrane proton channel. CF(1) has five subunits: alpha(3), beta(3), gamma(1), delta(1), epsilon(1). CF(0) has three main subunits: a, b and c.

The protein resides in the plastid. The protein localises to the chloroplast thylakoid membrane. In terms of biological role, produces ATP from ADP in the presence of a proton gradient across the membrane. This chain is ATP synthase epsilon chain, chloroplastic, found in Cyanidioschyzon merolae (strain NIES-3377 / 10D) (Unicellular red alga).